A 422-amino-acid polypeptide reads, in one-letter code: MHIHKIQAREILDSRGNPTIEADVILTTGIIGRASVPSGASTGSREACELRDNDPKRYAGKGVQKAVKHVNNEINQALQGLSVEDQENLDRILCQLDNTENKSHLGANAILATSLACARARALSLNQPLYMTLNQGDMMTMPVPMMNILNGGAHADNNVDIQEFMIMPIGAPDFPVALQMGTEIFHVLKSVLKKQGLNTAVGDEGGFAPNIQSNRQALDLLSEAIEKAGFRLGEDIVFALDVAASELFNEGFYHMYSENQKFDSHQLIEYYANLISSYPIVSIEDGLDEKDWSGWKQLTTHLGNKVQLVGDDLFVTNPKILREGIAQGVANAILIKVNQIGTLSETRQAIKLAYDNGYRCVMSHRSGETEDTFIADLAVASGCGQIKTGSLCRTDRTAKYNQLLRINELASLPYAGKNILKR.

Residue Gln162 coordinates (2R)-2-phosphoglycerate. Residue Glu204 is the Proton donor of the active site. Mg(2+) is bound by residues Asp241, Glu284, and Asp311. Residues Lys336, Arg365, Ser366, and Lys387 each contribute to the (2R)-2-phosphoglycerate site. Lys336 serves as the catalytic Proton acceptor.

Belongs to the enolase family. As to quaternary structure, component of the RNA degradosome, a multiprotein complex involved in RNA processing and mRNA degradation. It depends on Mg(2+) as a cofactor.

It localises to the cytoplasm. The protein resides in the secreted. The protein localises to the cell surface. The catalysed reaction is (2R)-2-phosphoglycerate = phosphoenolpyruvate + H2O. It functions in the pathway carbohydrate degradation; glycolysis; pyruvate from D-glyceraldehyde 3-phosphate: step 4/5. In terms of biological role, catalyzes the reversible conversion of 2-phosphoglycerate (2-PG) into phosphoenolpyruvate (PEP). It is essential for the degradation of carbohydrates via glycolysis. The chain is Enolase from Legionella pneumophila (strain Corby).